A 415-amino-acid chain; its full sequence is Serine hydroxymethyltransferase (415 aa).

(6S)-5,6,7,8-tetrahydrofolate contacts are provided by residues L117 and G121–L123. N6-(pyridoxal phosphate)lysine is present on K226. Residue E241 coordinates (6S)-5,6,7,8-tetrahydrofolate.

It belongs to the SHMT family. As to quaternary structure, homodimer. Requires pyridoxal 5'-phosphate as cofactor.

It localises to the cytoplasm. The catalysed reaction is (6R)-5,10-methylene-5,6,7,8-tetrahydrofolate + glycine + H2O = (6S)-5,6,7,8-tetrahydrofolate + L-serine. Its pathway is one-carbon metabolism; tetrahydrofolate interconversion. The protein operates within amino-acid biosynthesis; glycine biosynthesis; glycine from L-serine: step 1/1. Its function is as follows. Catalyzes the reversible interconversion of serine and glycine with tetrahydrofolate (THF) serving as the one-carbon carrier. This reaction serves as the major source of one-carbon groups required for the biosynthesis of purines, thymidylate, methionine, and other important biomolecules. Also exhibits THF-independent aldolase activity toward beta-hydroxyamino acids, producing glycine and aldehydes, via a retro-aldol mechanism. The polypeptide is Serine hydroxymethyltransferase (Bacillus velezensis (strain DSM 23117 / BGSC 10A6 / LMG 26770 / FZB42) (Bacillus amyloliquefaciens subsp. plantarum)).